The sequence spans 233 residues: Nickel import system ATP-binding protein NikE (233 aa).

Residues 2–228 (IELKHVTFGY…DRHPYTKELV (227 aa)) enclose the ABC transporter domain. An ATP-binding site is contributed by 35 to 42 (GESGCGKS).

It belongs to the ABC transporter superfamily. The complex is composed of two ATP-binding proteins (NikD and NikE), two transmembrane proteins (NikB and NikC) and a solute-binding protein (NikA).

It is found in the cell membrane. It catalyses the reaction Ni(2+)(out) + ATP + H2O = Ni(2+)(in) + ADP + phosphate + H(+). In terms of biological role, part of the ABC transporter complex NikABCDE (Opp2) involved in nickel import. Probably responsible for energy coupling to the transport system. The protein is Nickel import system ATP-binding protein NikE of Staphylococcus aureus (strain MRSA252).